A 206-amino-acid chain; its full sequence is MDRLLVLVRHGQSEWNLQNLFTGWKDPDLTDLGVSEAKAAGRALKTAGVGFDIGFTSDLLRAQRTMKLLLAEFGQPDLQVTKNVSLNERDYGDLSGLNKAEAAQQWGDEQVHLWRRSYDVPPPGGESLKDTVARVLPYYCQEILPAVLNGKRTLVTAHGNSLRALIMVLDKLTPKTIPGMELATGVPIVYRLKADSTVESKQVLEP.

Substrate is bound by residues 9 to 16 (RHGQSEWN), 22 to 23 (TG), Arg-61, 88 to 91 (ERDY), Lys-99, 115 to 116 (RR), and 159 to 160 (GN). Catalysis depends on His-10, which acts as the Tele-phosphohistidine intermediate. The active-site Proton donor/acceptor is the Glu-88.

The protein belongs to the phosphoglycerate mutase family. BPG-dependent PGAM subfamily. Homodimer.

The catalysed reaction is (2R)-2-phosphoglycerate = (2R)-3-phosphoglycerate. It functions in the pathway carbohydrate degradation; glycolysis; pyruvate from D-glyceraldehyde 3-phosphate: step 3/5. Catalyzes the interconversion of 2-phosphoglycerate and 3-phosphoglycerate. In Methylocella silvestris (strain DSM 15510 / CIP 108128 / LMG 27833 / NCIMB 13906 / BL2), this protein is 2,3-bisphosphoglycerate-dependent phosphoglycerate mutase.